The sequence spans 482 residues: MVESQKAMPQPKMGRIRRIHFVGIGGVGMCGIAEVLLNLGYEVSGSDLKASPVTERLESFGAEIFVGHRAENAASADVLVVSSAINPANPEVATALERRIPVVPRAEMLAELMRYRHGVAVAGTHGKTTTTSLLASVFAAGGLDPTFVIGGRLTAAGTNAQLGTSRYLIAEADESDASFLHLQPMVAVVTNIDADHMATYEGDFNKLKKTFVEFLHNLPFYGLAVMCLDDPVVREILPQVKRPTVTYGFSEEADIRAINVRQQGMQTHFTVLRRDCEPLEVSVNMPGNHNVLNALATIAIATDEGISDEAIVQGLSGFQGVGRRFQVYGELPVEGGSVMLVDDYGHHPTEVAAVIKAVRGGWPSRRLVIVYQPHRYSRTRDLYDDFVQVLGDANVLLLMEVYPAGEEPIPGADSRQLCHSIRQRGKLDPIYIERGAELAPLVKPLLRAGDILICQGAGDVGGLAPQLMKSPLFAGAKQEKSK.

123–129 (GTHGKTT) contributes to the ATP binding site.

This sequence belongs to the MurCDEF family.

It is found in the cytoplasm. The catalysed reaction is UDP-N-acetyl-alpha-D-muramate + L-alanine + ATP = UDP-N-acetyl-alpha-D-muramoyl-L-alanine + ADP + phosphate + H(+). It functions in the pathway cell wall biogenesis; peptidoglycan biosynthesis. Cell wall formation. The protein is UDP-N-acetylmuramate--L-alanine ligase of Pseudomonas entomophila (strain L48).